The primary structure comprises 394 residues: Elongation factor Tu (394 aa).

Residues 10 to 204 (KPHVNVGTIG…ALDSYIPEPE (195 aa)) form the tr-type G domain. Residues 19-26 (GHVDHGKT) are G1. 19–26 (GHVDHGKT) lines the GTP pocket. T26 contacts Mg(2+). The G2 stretch occupies residues 60–64 (GITIS). The tract at residues 81 to 84 (DCPG) is G3. Residues 81-85 (DCPGH) and 136-139 (NKCD) contribute to the GTP site. Positions 136–139 (NKCD) are G4. Residues 174 to 176 (SAL) form a G5 region.

Belongs to the TRAFAC class translation factor GTPase superfamily. Classic translation factor GTPase family. EF-Tu/EF-1A subfamily. As to quaternary structure, monomer.

The protein localises to the cytoplasm. The catalysed reaction is GTP + H2O = GDP + phosphate + H(+). Its function is as follows. GTP hydrolase that promotes the GTP-dependent binding of aminoacyl-tRNA to the A-site of ribosomes during protein biosynthesis. The chain is Elongation factor Tu from Pseudoalteromonas atlantica (strain T6c / ATCC BAA-1087).